The primary structure comprises 177 residues: Large ribosomal subunit protein uL6 (177 aa).

The protein belongs to the universal ribosomal protein uL6 family. In terms of assembly, part of the 50S ribosomal subunit.

In terms of biological role, this protein binds to the 23S rRNA, and is important in its secondary structure. It is located near the subunit interface in the base of the L7/L12 stalk, and near the tRNA binding site of the peptidyltransferase center. In Pseudomonas fluorescens (strain ATCC BAA-477 / NRRL B-23932 / Pf-5), this protein is Large ribosomal subunit protein uL6.